The sequence spans 420 residues: Glycogen synthase kinase-3 beta (420 aa).

The segment covering 1–24 (MSGRPRTTSFAESCKPVQQPSSFG) has biased composition (polar residues). Residues 1–50 (MSGRPRTTSFAESCKPVQQPSSFGSMKVSRDKDGSKVTTVVATPGQGPDR) are disordered. A Protein kinase domain is found at 56–340 (YTDTKVIGNG…PLDACAHSFF (285 aa)). Residues 62 to 70 (IGNGSFGVV) and Lys85 each bind ATP. Catalysis depends on Asp181, which acts as the Proton acceptor. Residues 384–420 (NQAAVSTTSNTTSTSDSNTGERGSTNNAASASASNSS) are disordered. Composition is skewed to low complexity over residues 389–401 (STTS…SDSN) and 409–420 (NNAASASASNSS).

It belongs to the protein kinase superfamily. CMGC Ser/Thr protein kinase family. GSK-3 subfamily. Phosphorylated. Activated by phosphorylation at Tyr-216.

It localises to the cytoplasm. The protein resides in the nucleus. The protein localises to the cell membrane. It catalyses the reaction L-seryl-[tau protein] + ATP = O-phospho-L-seryl-[tau protein] + ADP + H(+). The enzyme catalyses L-threonyl-[tau protein] + ATP = O-phospho-L-threonyl-[tau protein] + ADP + H(+). Plays a role in the organization of the formation of the main body axis of developing embryo. Acts as an inhibitor of differentiation of primary neurons. Inhibits the ability of ectopically expressed NEUROD1 and other bHLH factors to promote early retinal cell differentiation. May participate in the Wnt signaling pathway. May regulate the circadian clock via phosphorylation of the major clock components. This is Glycogen synthase kinase-3 beta (gsk3b) from Xenopus laevis (African clawed frog).